The sequence spans 181 residues: Sodium/potassium-transporting ATPase subunit beta-1-interacting protein 3 (181 aa).

The next 4 membrane-spanning stretches (helical) occupy residues G2–L22, A35–I55, I62–F82, and V152–M172.

The protein belongs to the NKAIN family. Interacts with ATP1B1. Detected in the brain only and specifically in neurons. Expressed in multiple regions such as cerebral cortex, thalamus, hippocampus, olfactory bulb and brainstem as well as in cerebellum with low expression in granular cell layer.

The protein localises to the cell membrane. This Mus musculus (Mouse) protein is Sodium/potassium-transporting ATPase subunit beta-1-interacting protein 3 (Nkain3).